A 98-amino-acid polypeptide reads, in one-letter code: Co-chaperonin GroES 4 (98 aa).

Belongs to the GroES chaperonin family. In terms of assembly, heptamer of 7 subunits arranged in a ring. Interacts with the chaperonin GroEL.

Its subcellular location is the cytoplasm. Together with the chaperonin GroEL, plays an essential role in assisting protein folding. The GroEL-GroES system forms a nano-cage that allows encapsulation of the non-native substrate proteins and provides a physical environment optimized to promote and accelerate protein folding. GroES binds to the apical surface of the GroEL ring, thereby capping the opening of the GroEL channel. The polypeptide is Co-chaperonin GroES 4 (Mesorhizobium japonicum (strain LMG 29417 / CECT 9101 / MAFF 303099) (Mesorhizobium loti (strain MAFF 303099))).